A 95-amino-acid polypeptide reads, in one-letter code: Small ribosomal subunit protein bS6 (95 aa).

The protein belongs to the bacterial ribosomal protein bS6 family.

Binds together with bS18 to 16S ribosomal RNA. This is Small ribosomal subunit protein bS6 from Oceanobacillus iheyensis (strain DSM 14371 / CIP 107618 / JCM 11309 / KCTC 3954 / HTE831).